The chain runs to 140 residues: Large ribosomal subunit protein bL21 (140 aa).

The segment at 106 to 140 is disordered; sequence SGVKPAVGARTKIEPAVKPAKAKKSEAEASAEDAN.

It belongs to the bacterial ribosomal protein bL21 family. As to quaternary structure, part of the 50S ribosomal subunit. Contacts protein L20.

In terms of biological role, this protein binds to 23S rRNA in the presence of protein L20. This chain is Large ribosomal subunit protein bL21, found in Paracoccus denitrificans (strain Pd 1222).